Here is a 2175-residue protein sequence, read N- to C-terminus: Non-reducing polyketide synthase PKS1 (2175 aa).

The tract at residues 5-242 (LLFGDQTAEQ…VSIPIYGPYH (238 aa)) is N-terminal acylcarrier protein transacylase domain (SAT). The Ketosynthase family 3 (KS3) domain occupies 369–801 (TDKIAIVGMA…GGNTALLIED (433 aa)). Active-site for beta-ketoacyl synthase activity residues include C541, H676, and H719. The malonyl-CoA:ACP transacylase (MAT) domain stretch occupies residues 900–1212 (FCFTGQGSQY…ISTSICHLFT (313 aa)). The active-site For acyl/malonyl transferase activity is S988. Residues 1285-1604 (STSCQNVISE…RKVLNVFLPP (320 aa)) form a product template (PT) domain region. Residues 1289 to 1424 (QNVISEEFDG…CTIRYEDKAV (136 aa)) are N-terminal hotdog fold. The region spanning 1289 to 1599 (QNVISEEFDG…FQQIPRKVLN (311 aa)) is the PKS/mFAS DH domain. Residue H1321 is the Proton acceptor; for dehydratase activity of the active site. The segment at 1452-1599 (AHKVQRGMAY…FQQIPRKVLN (148 aa)) is C-terminal hotdog fold. Catalysis depends on D1512, which acts as the Proton donor; for dehydratase activity. The tract at residues 1640–1664 (PVRKSAGPAKAAAAPSMPKPSKVAA) is disordered. The span at 1643 to 1664 (KSAGPAKAAAAPSMPKPSKVAA) shows a compositional bias: low complexity. A Carrier 1 domain is found at 1666–1743 (KPAGSMVDKV…EMKKYFSQFN (78 aa)). S1703 bears the O-(pantetheine 4'-phosphoryl)serine mark. Residues 1766 to 1804 (ATPFDEMSTPASSAPSVPQSDAGKPSPDSPTGDSLSDDV) are disordered. The span at 1774–1784 (TPASSAPSVPQ) shows a compositional bias: polar residues. Residues 1801–1878 (SDDVGDVSIA…DIENALGMRP (78 aa)) enclose the Carrier 2 domain. S1838 bears the O-(pantetheine 4'-phosphoryl)serine mark. The segment at 1879–1899 (KPKAVGPKLSKPSTKTDMNEV) is disordered. The segment covering 1889–1899 (KPSTKTDMNEV) has biased composition (polar residues). Positions 1932–2158 (KVFFLPDGSG…GHHFSMMKDP (227 aa)) are claisen cyclase domain. The active-site For Claisen cyclase activity is the S2002.

Pantetheine 4'-phosphate serves as cofactor.

The enzyme catalyses 6 malonyl-CoA + acetyl-CoA + 6 H(+) = naphtopyrone YWA1 + 6 CO2 + 7 CoA + H2O. It participates in pigment biosynthesis; melanin biosynthesis. In terms of biological role, non-reducing polyketide synthase; part of the gene cluster 29 that mediates the biosynthesis of mediates the biosynthesis of dihydroxynaphthalene (DHN)-melanin, a bluish-green pigment and a structural component of the conidial wall. The first step of the pathway is the production of the heptaketide naphtopyrone YWA1 by the polyketide synthase PKS1 though condensation of acetyl-CoA with malonyl-CoA. The protein is Non-reducing polyketide synthase PKS1 of Zymoseptoria tritici (strain CBS 115943 / IPO323) (Speckled leaf blotch fungus).